Reading from the N-terminus, the 218-residue chain is MNIKEFLSNKKGASGIGTLIVFIAMVLVAAVAASVLINTSGFLQQKASTTGKESTEQVASGLQVTGVTGVNSTDSENITHIVAYITPKAGSSAIDLSQAKLFVTYNGVSAVLKANESAIDGTSGTPDVLSATLLSNTSATEYQVVSLQDFDGSVAKNQVINKGDLVAIRISTGQVFSSTKGIPTRAHVSGKLQPEFGAPGIIEFTTPATFTTKVVELQ.

Positions 1–12 (MNIKEFLSNKKG) are excised as a propeptide. N38, N71, N77, N115, and N136 each carry an N-linked (GlcNAc...) asparagine glycan.

It belongs to the archaeal flagellin family. In terms of processing, N-linked glycans consist of the 779 Da trisaccharide beta-ManNAc(Thr)-(1-4)-beta-GlcNAc3NAcA-(1-3)-beta-GlcNAc.

It is found in the archaeal flagellum. Flagellin is the subunit protein which polymerizes to form the filaments of archaeal flagella. The protein is Flagellin B1 (flaB1) of Methanococcus voltae.